Consider the following 304-residue polypeptide: Protein INO2 (304 aa).

The region spanning 236 to 290 (VRKWKHVQMEKIRRINTKEAFERLIKSVRTPPKENGKRIPKHILLTCVMNDIKSI) is the bHLH domain.

In terms of assembly, efficient DNA binding requires dimerization with another bHLH protein.

Its subcellular location is the nucleus. In terms of biological role, positive regulatory factor required for depression of the coregulated phospholipid biosynthetic enzymes. Also involved in the expression of ITR1. The chain is Protein INO2 (INO2) from Saccharomyces cerevisiae (strain ATCC 204508 / S288c) (Baker's yeast).